We begin with the raw amino-acid sequence, 309 residues long: tRNA dimethylallyltransferase (309 aa).

ATP is bound at residue 9 to 16 (GPTAIGKT). Substrate is bound at residue 11-16 (TAIGKT). Interaction with substrate tRNA regions lie at residues 34-37 (DSRQ) and 164-168 (QRMMR).

It belongs to the IPP transferase family. As to quaternary structure, monomer. The cofactor is Mg(2+).

It catalyses the reaction adenosine(37) in tRNA + dimethylallyl diphosphate = N(6)-dimethylallyladenosine(37) in tRNA + diphosphate. Its function is as follows. Catalyzes the transfer of a dimethylallyl group onto the adenine at position 37 in tRNAs that read codons beginning with uridine, leading to the formation of N6-(dimethylallyl)adenosine (i(6)A). This Flavobacterium johnsoniae (strain ATCC 17061 / DSM 2064 / JCM 8514 / BCRC 14874 / CCUG 350202 / NBRC 14942 / NCIMB 11054 / UW101) (Cytophaga johnsonae) protein is tRNA dimethylallyltransferase.